A 744-amino-acid polypeptide reads, in one-letter code: MITNKKIKISVPEKLGLSEESFEESWETVKYAIDHIYSDDMADLSFEQVYKTIYTIVLNKKGPILYNRLKDYLIQKLALLRETIVKDNTHDYEFLGTMARLWEVQCHCFKITGDLMMYMDKVYCKPNRCMEVYDMCLDLFRIEILQKCSSSLISALISDIERIRNLGSVDSEHTSLWKVLIGMMETLHDNRDSFFLTDFEPVLISATEEYYNKAIDIELLTPIESLEKIRKLRQFESMLDSSFLNVDSHNKLKTVLENVLIWGKLSDIIEDLTHEAMVISNGKLLQEIYDLSSEEKYRVTVIESIKSYINKNAINIPFNEGNRKKGQNAITWSSEIVELYRSQHSFLESIDFGSVRLNNLTGDVSNAILGDVFSMYFSKEGALPSEYLSTYVDHCMKRTKEKDAEIVKIKQDLLDSTKLIGLLTEKDIFEKIYKKQLSRRLLQQRSLVEIEKWMVQMIKKVLGTFFTSKLEIMLRDISLSSEMYQAFQHSTINSIEYLSFAPQVLTRTSWPFQSTNPIDEGISLPPRMSQILAGFEGYYSLKYKERVLKWAHHLSVIEIGCQFNSGYYEISFSVYAGVIFLLFEDYEELTLGEIYELTHIPIDDVKSLVMSMSTIPRCKILKKSSSSGNMKFSVNYFFSSPNRKVKVPVIACPLPSQKSDNLATASSVDTYDNEIVMELSAIIVRIMKTEGKLSHQQLLERTTKRTQSRLSLTPSILKRSIQLLIEKEYIQRNADDPSYYHYLS.

The Cullin neddylation domain occupies M677–D736. K688 participates in a covalent cross-link: Glycyl lysine isopeptide (Lys-Gly) (interchain with G-Cter in NEDD8).

This sequence belongs to the cullin family. As to quaternary structure, component of a ubiquitin-protein ligase complex consisting of the cullin CUL3, the linker protein ELC1, the substrate receptor ELA1, and the RING protein HRT1. In terms of processing, neddylated; enhancing the ubiquitin-ligase activity.

The protein operates within protein modification; protein ubiquitination. Functionally, as part of the CRL3 E3 ubiquitin ligase complex; polyubiquitylates monoubiquitylated RNA polymerase II subunit RPO21 to trigger its proteolysis; plays a role in global genomic repair. In Saccharomyces cerevisiae (strain ATCC 204508 / S288c) (Baker's yeast), this protein is Cullin-3 (CUL3).